The primary structure comprises 297 residues: Small ribosomal subunit biogenesis GTPase RsgA (297 aa).

One can recognise a CP-type G domain in the interval 65–223 (INEIGRPAVA…IADTPGFSAI (159 aa)). GTP is bound by residues 114 to 117 (SKSD) and 166 to 174 (GQSGAGKST). The Zn(2+) site is built by C247, C252, H254, and C260.

It belongs to the TRAFAC class YlqF/YawG GTPase family. RsgA subfamily. In terms of assembly, monomer. Associates with 30S ribosomal subunit, binds 16S rRNA. Zn(2+) is required as a cofactor.

It is found in the cytoplasm. Functionally, one of several proteins that assist in the late maturation steps of the functional core of the 30S ribosomal subunit. Helps release RbfA from mature subunits. May play a role in the assembly of ribosomal proteins into the subunit. Circularly permuted GTPase that catalyzes slow GTP hydrolysis, GTPase activity is stimulated by the 30S ribosomal subunit. This Lactobacillus johnsonii (strain CNCM I-12250 / La1 / NCC 533) protein is Small ribosomal subunit biogenesis GTPase RsgA.